The following is a 188-amino-acid chain: COMM domain-containing protein 1 (188 aa).

The tract at residues 1 to 122 (MAGDLEGGKS…RWDNGLRGLS (122 aa)) is sufficient for interaction with SLC12A2. 3 residues coordinate Cu cation: His-100, Met-109, and His-133. In terms of domain architecture, COMM spans 117–185 (GLRGLSWRVD…EVEESINRLM (69 aa)). The tract at residues 124–188 (RVDGKSQSRH…ESINRLMQAA (65 aa)) is required for binding to PtdIns(4,5)P2.

It belongs to the COMM domain-containing protein 1 family. Component of the commander complex consisting of the CCC subcomplex and the retriever subcomplex. Component of the CCC (COMMD/CCDC22/CCDC93) subcomplex consisting of COMMD1, COMMD2, COMMD3, COMMD4, COMMD5, COMMD6, COMMD7, COMMD8, COMMD9, COMMD10, CCDC22 and CCDC93; within the complex forms a heterodimer with COMMD6. Interacts with VPS35L; the interaction associates the CCC complex with the retriever complex. Identified in a complex with an E3 ubiquitin ligase complex composed of TCEB1/elongin C, CUL2, SOCS1 and RBX1; in the complex interacts directly with SOCS1 and CUL2. Identified in a complex with NF-kappa-B. Interacts directly with SLC12A2. Interacts directly with ATP7B (via the N-terminal region). Interacts with ATP7A. Interacts with FAM107A; this interaction stabilizes COMMD1 in the nucleus. Interacts with CCS, CDKN2A, RELA, REL, RELB, NFKB1/p105, NFKB2/p100, NFKBIB, SCNN1D, SCNN1B, CFTR, CLU, SGK1, AKT1, CUL1, CUL2, CUL3, CUL4A, CUL4B, CUL5, CUL7, HIF1A. Post-translationally, ubiquitinated; undergoes both 'Lys-63'- and 'Lys-48'-linked polyubiquitination. Ubiquitinated by XIAP, leading to its proteasomal degradation.

Its subcellular location is the nucleus. The protein localises to the cytoplasm. The protein resides in the endosome membrane. It is found in the cytoplasmic vesicle. It localises to the early endosome. Its subcellular location is the recycling endosome. In terms of biological role, scaffold protein in the commander complex that is essential for endosomal recycling of transmembrane cargos; the commander complex is composed of the CCC subcomplex and the retriever subcomplex. Can modulate activity of cullin-RING E3 ubiquitin ligase (CRL) complexes by displacing CAND1; in vitro promotes CRL E3 activity and dissociates CAND1 from CUL1 and CUL2. Promotes ubiquitination of NF-kappa-B subunit RELA and its subsequent proteasomal degradation. Down-regulates NF-kappa-B activity. Involved in the regulation of membrane expression and ubiquitination of SLC12A2. Modulates Na(+) transport in epithelial cells by regulation of apical cell surface expression of amiloride-sensitive sodium channel (ENaC) subunits and by promoting their ubiquitination presumably involving NEDD4L. Promotes the localization of SCNN1D to recycling endosomes. Promotes CFTR cell surface expression through regulation of its ubiquitination. Down-regulates SOD1 activity by interfering with its homodimerization. Plays a role in copper ion homeostasis. Involved in copper-dependent ATP7A trafficking between the trans-Golgi network and vesicles in the cell periphery; the function is proposed to depend on its association within the CCC complex and cooperation with the WASH complex on early endosomes. Can bind one copper ion per monomer. May function to facilitate biliary copper excretion within hepatocytes. Binds to phosphatidylinositol 4,5-bisphosphate (PtdIns(4,5)P2). Involved in the regulation of HIF1A-mediated transcription; competes with ARNT/Hif-1-beta for binding to HIF1A resulting in decreased DNA binding and impaired transcriptional activation by HIF-1. Negatively regulates neuroblastoma G1/S phase cell cycle progression and cell proliferation by stimulating ubiquitination of NF-kappa-B subunit RELA and NF-kappa-B degradation in a FAM107A- and actin-dependent manner. In Mus musculus (Mouse), this protein is COMM domain-containing protein 1 (Commd1).